The primary structure comprises 392 residues: O-phospho-L-seryl-tRNA:Cys-tRNA synthase 1 (392 aa).

Pyridoxal 5'-phosphate is bound by residues 85 to 86 (AR), Asn190, and 213 to 215 (SGH). Residue Lys216 is modified to N6-(pyridoxal phosphate)lysine.

The protein belongs to the SepCysS family. Homodimer. Interacts with SepRS. It depends on pyridoxal 5'-phosphate as a cofactor.

The enzyme catalyses O-phospho-L-seryl-tRNA(Cys) + hydrogen sulfide + H(+) = L-cysteinyl-tRNA(Cys) + phosphate. In terms of biological role, converts O-phospho-L-seryl-tRNA(Cys) (Sep-tRNA(Cys)) to L-cysteinyl-tRNA(Cys) (Cys-tRNA(Cys)). The chain is O-phospho-L-seryl-tRNA:Cys-tRNA synthase 1 from Methanocorpusculum labreanum (strain ATCC 43576 / DSM 4855 / Z).